Here is a 354-residue protein sequence, read N- to C-terminus: Glutaminyl-peptide cyclotransferase (354 aa).

A mitochondrion-targeting transit peptide spans 1 to 8; the sequence is MRLLLRNY. A disulfide bond links C136 and C158. Position 153 (D153) interacts with Zn(2+). E190 serves as the catalytic Proton acceptor. E191 provides a ligand contact to Zn(2+). Catalysis depends on D228, which acts as the Proton acceptor. H318 provides a ligand contact to Zn(2+).

This sequence belongs to the glutaminyl-peptide cyclotransferase family.

The protein resides in the secreted. It is found in the mitochondrion. It carries out the reaction N-terminal L-glutaminyl-[peptide] = N-terminal 5-oxo-L-prolyl-[peptide] + NH4(+). With respect to regulation, inhibited by imidazoles (imidazole, benzimidazole, 1-benzylimidazole, 1-methylimidazole, P150/03 and N-omega-acetylhistamine) and cysteamines (cysteamine and N-dimethylcysteamine). Inhibited by PDB50 1(3,4-dimethoxyphenyl)-3-(3-imidazol-1-ylpropyl)thiourea. Its function is as follows. Acts as a glutaminyl-peptide cyclotransferase. Responsible for the biosynthesis of pyroglutamyl peptides. Might be more efficient in the conversion of tri and tetrapeptides in vitro. Might have a relative preference for substrates containing hydrophobic amino acids in vitro. The sequence is that of Glutaminyl-peptide cyclotransferase from Drosophila melanogaster (Fruit fly).